The following is a 430-amino-acid chain: Adenylosuccinate synthetase (430 aa).

Residues 12–18 and 40–42 each bind GTP; these read GDEGKGK and GHT. The Proton acceptor role is filled by D13. Mg(2+) is bound by residues D13 and G40. IMP-binding positions include 13–16, 38–41, T130, R144, Q224, and T239; these read DEGK and NAGH. H41 acts as the Proton donor in catalysis. Positions 277 to 297 are disordered; it reads PFPTEQDNETGRKIGERGREF. A compositionally biased stretch (basic and acidic residues) spans 285–296; sequence ETGRKIGERGRE. 299–305 lines the substrate pocket; sequence TNTGRPR. IMP is bound at residue R303. Residues R305, 331-333, and 413-415 contribute to the GTP site; these read KLD and STS.

Belongs to the adenylosuccinate synthetase family. As to quaternary structure, homodimer. Mg(2+) is required as a cofactor.

The protein resides in the cytoplasm. The enzyme catalyses IMP + L-aspartate + GTP = N(6)-(1,2-dicarboxyethyl)-AMP + GDP + phosphate + 2 H(+). The protein operates within purine metabolism; AMP biosynthesis via de novo pathway; AMP from IMP: step 1/2. Plays an important role in the de novo pathway of purine nucleotide biosynthesis. Catalyzes the first committed step in the biosynthesis of AMP from IMP. The chain is Adenylosuccinate synthetase from Bradyrhizobium sp. (strain ORS 278).